Reading from the N-terminus, the 390-residue chain is Transforming growth factor beta-1 proprotein (390 aa).

The first 29 residues, 1–29 (MPPSGLRLLPLLLPLLWLLMLTPGRPVAG), serve as a signal peptide directing secretion. The straightjacket domain stretch occupies residues 30–74 (LSTCKTIDMELVKRKGIEAIRGQILSKLRLASPPSQGDVPPGPLP). The segment at 75-271 (EAILALYNST…ATPLERAQHL (197 aa)) is arm domain. 3 N-linked (GlcNAc...) asparagine glycosylation sites follow: Asn-82, Asn-136, and Asn-176. Positions 226–252 (DSKDNTLQVDINGFSSGRRGDLATIHG) are bowtie tail. Residues 244–246 (RGD) carry the Cell attachment site motif. 4 disulfides stabilise this stretch: Cys-285–Cys-294, Cys-293–Cys-356, Cys-322–Cys-387, and Cys-326–Cys-389.

Belongs to the TGF-beta family. Homodimer; disulfide-linked. Interacts with the serine proteases, HTRA1 and HTRA3: the interaction with either inhibits TGFB1-mediated signaling and the HTRA protease activity is required for this inhibition. May interact with THSD4; this interaction may lead to sequestration by FBN1 microfibril assembly and attenuation of TGFB signaling. Interacts with CD109, DPT and ASPN. Interacts with EFEMP2. Interacts with TSKU; the interaction contributes to regulation of the hair cycle. Interacts with TGFBR3. In terms of assembly, homodimer; disulfide-linked. Interacts with transforming growth factor beta-1 (TGF-beta-1) chain; interaction is non-covalent and maintains TGF-beta-1 in a latent state; each latency-associated peptide (LAP) monomer interacts with TGF-beta-1 in the other monomer. Interacts with LTBP1; leading to regulation of TGF-beta-1 activation. Interacts with LRRC32/GARP; leading to regulation of TGF-beta-1 activation on the surface of activated regulatory T-cells (Tregs). Interacts with LRRC33/NRROS; leading to regulation of TGF-beta-1 activation in macrophages and microglia. Interacts (via cell attachment site) with integrins ITGAV and ITGB6 (ITGAV:ITGB6), leading to release of the active TGF-beta-1. Interacts with NREP; the interaction results in a decrease in TGFB1 autoinduction. Interacts with HSP90AB1; inhibits latent TGFB1 activation. As to quaternary structure, homodimer; disulfide-linked. Interacts with TGF-beta receptors (TGFBR1 and TGFBR2), leading to signal transduction. Post-translationally, transforming growth factor beta-1 proprotein: The precursor proprotein is cleaved in the Golgi apparatus by FURIN to form Transforming growth factor beta-1 (TGF-beta-1) and Latency-associated peptide (LAP) chains, which remain non-covalently linked, rendering TGF-beta-1 inactive. N-glycosylated. Deglycosylation leads to activation of Transforming growth factor beta-1 (TGF-beta-1); mechanisms triggering deglycosylation-driven activation of TGF-beta-1 are however unclear.

The protein localises to the secreted. It is found in the extracellular space. It localises to the extracellular matrix. Its function is as follows. Transforming growth factor beta-1 proprotein: Precursor of the Latency-associated peptide (LAP) and Transforming growth factor beta-1 (TGF-beta-1) chains, which constitute the regulatory and active subunit of TGF-beta-1, respectively. Functionally, required to maintain the Transforming growth factor beta-1 (TGF-beta-1) chain in a latent state during storage in extracellular matrix. Associates non-covalently with TGF-beta-1 and regulates its activation via interaction with 'milieu molecules', such as LTBP1, LRRC32/GARP and LRRC33/NRROS, that control activation of TGF-beta-1. Interaction with LRRC33/NRROS regulates activation of TGF-beta-1 in macrophages and microglia. Interaction with LRRC32/GARP controls activation of TGF-beta-1 on the surface of activated regulatory T-cells (Tregs). Interaction with integrins (ITGAV:ITGB6 or ITGAV:ITGB8) results in distortion of the Latency-associated peptide chain and subsequent release of the active TGF-beta-1. In terms of biological role, multifunctional protein that regulates the growth and differentiation of various cell types and is involved in various processes, such as normal development, immune function, microglia function and responses to neurodegeneration. Activation into mature form follows different steps: following cleavage of the proprotein in the Golgi apparatus, Latency-associated peptide (LAP) and Transforming growth factor beta-1 (TGF-beta-1) chains remain non-covalently linked rendering TGF-beta-1 inactive during storage in extracellular matrix. At the same time, LAP chain interacts with 'milieu molecules', such as LTBP1, LRRC32/GARP and LRRC33/NRROS that control activation of TGF-beta-1 and maintain it in a latent state during storage in extracellular milieus. TGF-beta-1 is released from LAP by integrins (ITGAV:ITGB6 or ITGAV:ITGB8): integrin-binding to LAP stabilizes an alternative conformation of the LAP bowtie tail and results in distortion of the LAP chain and subsequent release of the active TGF-beta-1. Once activated following release of LAP, TGF-beta-1 acts by binding to TGF-beta receptors (TGFBR1 and TGFBR2), which transduce signal. While expressed by many cells types, TGF-beta-1 only has a very localized range of action within cell environment thanks to fine regulation of its activation by Latency-associated peptide chain (LAP) and 'milieu molecules'. Plays an important role in bone remodeling: acts as a potent stimulator of osteoblastic bone formation, causing chemotaxis, proliferation and differentiation in committed osteoblasts. Can promote either T-helper 17 cells (Th17) or regulatory T-cells (Treg) lineage differentiation in a concentration-dependent manner. At high concentrations, leads to FOXP3-mediated suppression of RORC and down-regulation of IL-17 expression, favoring Treg cell development. At low concentrations in concert with IL-6 and IL-21, leads to expression of the IL-17 and IL-23 receptors, favoring differentiation to Th17 cells. Stimulates sustained production of collagen through the activation of CREB3L1 by regulated intramembrane proteolysis (RIP). Mediates SMAD2/3 activation by inducing its phosphorylation and subsequent translocation to the nucleus. Positively regulates odontoblastic differentiation in dental papilla cells, via promotion of IPO7-mediated translocation of phosphorylated SMAD2 to the nucleus and subsequent transcription of target genes. Can induce epithelial-to-mesenchymal transition (EMT) and cell migration in various cell types. The protein is Transforming growth factor beta-1 proprotein (TGFB1) of Ovis aries (Sheep).